The following is a 142-amino-acid chain: Large ribosomal subunit protein uL11 (142 aa).

It belongs to the universal ribosomal protein uL11 family. In terms of assembly, part of the ribosomal stalk of the 50S ribosomal subunit. Interacts with L10 and the large rRNA to form the base of the stalk. L10 forms an elongated spine to which L12 dimers bind in a sequential fashion forming a multimeric L10(L12)X complex. Post-translationally, one or more lysine residues are methylated.

In terms of biological role, forms part of the ribosomal stalk which helps the ribosome interact with GTP-bound translation factors. The sequence is that of Large ribosomal subunit protein uL11 from Mycobacterium sp. (strain MCS).